We begin with the raw amino-acid sequence, 139 residues long: Maximins 4/H3 type 4 (139 aa).

The signal sequence occupies residues 1–18 (MNFKYIIAVSFLIASAYA). Residues 19–43 (RSVQNDEQSLSQRDVLEEESLREIR) constitute a propeptide that is removed on maturation. An Asparagine amide modification is found at Asn-70. A propeptide spanning residues 74-118 (TAEEHEVMKRLEAVMRDLDSLDHPEEASERETRGFNQDEIAKEKR) is cleaved from the precursor. Residue Ile-138 is modified to Isoleucine amide.

It belongs to the bombinin family. In terms of tissue distribution, expressed by the skin glands.

It localises to the secreted. In terms of biological role, maximin-4 shows antibacterial activity against both Gram-positive and Gram-negative bacteria. It also shows antimicrobial activity against the fungus C.albicans, but not against A.flavus nor P.uticale. It has little hemolytic activity. It does not possess a significant cytotoxicity against tumor cell lines. It does not possess a significant anti-HIV activity. Maximin-H3 shows antibacterial activity against both Gram-positive and Gram-negative bacteria. It also shows antimicrobial activity against the fungus C.albicans. Shows strong hemolytic activity. The polypeptide is Maximins 4/H3 type 4 (Bombina maxima (Giant fire-bellied toad)).